The following is a 93-amino-acid chain: Small ribosomal subunit protein uS19 (93 aa).

It belongs to the universal ribosomal protein uS19 family.

Functionally, protein S19 forms a complex with S13 that binds strongly to the 16S ribosomal RNA. The polypeptide is Small ribosomal subunit protein uS19 (Citrifermentans bemidjiense (strain ATCC BAA-1014 / DSM 16622 / JCM 12645 / Bem) (Geobacter bemidjiensis)).